Reading from the N-terminus, the 500-residue chain is DNA double-strand break repair helicase HerA (500 aa).

Residues Arg142, 151–156 (GSGKSN), and 459–460 (KI) contribute to the ATP site.

It belongs to the HerA family. Homohexamer. Forms a complex with NurA.

The enzyme catalyses Couples ATP hydrolysis with the unwinding of duplex DNA at the replication fork by translocating in the 5'-3' direction. This creates two antiparallel DNA single strands (ssDNA). The leading ssDNA polymer is the template for DNA polymerase III holoenzyme which synthesizes a continuous strand.. The catalysed reaction is ATP + H2O = ADP + phosphate + H(+). It catalyses the reaction Couples ATP hydrolysis with the unwinding of duplex DNA by translocating in the 3'-5' direction.. With respect to regulation, ATPase activity is stimulated in the presence of linear double-stranded (ds)DNA. Helicase activity requires the presence of NurA. LhrC-Core (Hel112) inhibits the exonuclease activity of the HerA-NurA complex on ss- and dsDNA, has no effect on the nicking activity of NurA. Involved in DNA double-strand break (DSB) repair. Probably acts with NurA to stimulate resection of the 5' strand and produce the long 3' single-strand that is required for RadA loading. NurA and HerA together stimulate the end-resection of six nucleotides of a linear DNA substrate. Has DNA-dependent ATPase activity and bidirectional DNA helicase activity. Preferentially binds single stranded (ss)DNA, bubble and semiforked DNA substrate over other DNA molecules tested. Stimulates the exo- but not endonuclease activity of NurA. This Saccharolobus solfataricus (strain ATCC 35092 / DSM 1617 / JCM 11322 / P2) (Sulfolobus solfataricus) protein is DNA double-strand break repair helicase HerA.